The chain runs to 283 residues: 4-diphosphocytidyl-2-C-methyl-D-erythritol kinase (283 aa).

The active site involves K10. P99–S109 lines the ATP pocket. D141 is a catalytic residue.

This sequence belongs to the GHMP kinase family. IspE subfamily. Homodimer.

It carries out the reaction 4-CDP-2-C-methyl-D-erythritol + ATP = 4-CDP-2-C-methyl-D-erythritol 2-phosphate + ADP + H(+). The protein operates within isoprenoid biosynthesis; isopentenyl diphosphate biosynthesis via DXP pathway; isopentenyl diphosphate from 1-deoxy-D-xylulose 5-phosphate: step 3/6. Its function is as follows. Catalyzes the phosphorylation of the position 2 hydroxy group of 4-diphosphocytidyl-2C-methyl-D-erythritol. In Escherichia coli O7:K1 (strain IAI39 / ExPEC), this protein is 4-diphosphocytidyl-2-C-methyl-D-erythritol kinase.